The sequence spans 145 residues: Large ribosomal subunit protein uL16 (145 aa).

It belongs to the universal ribosomal protein uL16 family. As to quaternary structure, part of the 50S ribosomal subunit.

In terms of biological role, binds 23S rRNA and is also seen to make contacts with the A and possibly P site tRNAs. The chain is Large ribosomal subunit protein uL16 from Shouchella clausii (strain KSM-K16) (Alkalihalobacillus clausii).